Here is a 355-residue protein sequence, read N- to C-terminus: MNPIRKIIHIDMDCFYAAIEMRDFPELANKPIAVGGDAKRRGVIATCNYAARQFGIRSAMPTAHALKLCRELILRPVRMDVYQKESQYIRSLLTEYTDLIEPLSLDEAYLDVTESTQCQGSATWIAEEIRARIYQARQLTASAGIAPNKSLAKIASDWHKPNGQMVIRPEDVSAFVLDLPVRKLFGVGPKMEEKLRALNIKTCADLQRYSIEYLLQKFGTMGQRLYELARGIDNRPVNPERIRKSISVEETYPKDLPNSEACLAVLPDLMARLEARIQRAGKISGIHNLFVKLKFNDFQQTTIERVMDKLDLIVLRQLIQEGFARRGMPVRLLGIGIKLKQENTYQSVQLPLLDL.

Positions 7 to 188 constitute a UmuC domain; sequence IIHIDMDCFY…LPVRKLFGVG (182 aa). Asp-11 and Asp-106 together coordinate Mg(2+). Glu-107 is an active-site residue.

The protein belongs to the DNA polymerase type-Y family. As to quaternary structure, monomer. Requires Mg(2+) as cofactor.

The protein localises to the cytoplasm. The catalysed reaction is DNA(n) + a 2'-deoxyribonucleoside 5'-triphosphate = DNA(n+1) + diphosphate. In terms of biological role, poorly processive, error-prone DNA polymerase involved in untargeted mutagenesis. Copies undamaged DNA at stalled replication forks, which arise in vivo from mismatched or misaligned primer ends. These misaligned primers can be extended by PolIV. Exhibits no 3'-5' exonuclease (proofreading) activity. May be involved in translesional synthesis, in conjunction with the beta clamp from PolIII. This chain is DNA polymerase IV, found in Legionella pneumophila subsp. pneumophila (strain Philadelphia 1 / ATCC 33152 / DSM 7513).